Reading from the N-terminus, the 38-residue chain is Conotoxin r7a (38 aa).

The propeptide occupies 1–5 (APAKR). At W6 the chain carries 6'-bromotryptophan. 4-carboxyglutamate is present on residues E10 and E11. Cystine bridges form between C12–C26, C19–C30, and C25–C35. The residue at position 15 (W15) is a 6'-bromotryptophan. 4-carboxyglutamate is present on residues E20 and E31. W38 carries the 6'-bromotryptophan modification.

The protein belongs to the conotoxin O2 superfamily. Expressed by the venom duct.

Its subcellular location is the secreted. Induces a sleep-like state in mice. The chain is Conotoxin r7a from Conus radiatus (Rayed cone).